The chain runs to 255 residues: Type III pantothenate kinase (255 aa).

Residue 6-13 (DIGNTNIK) coordinates ATP. Substrate is bound at residue 107 to 110 (GADR). Catalysis depends on aspartate 109, which acts as the Proton acceptor. Threonine 132 contacts ATP. Substrate is bound at residue threonine 184.

The protein belongs to the type III pantothenate kinase family. Homodimer. Requires NH4(+) as cofactor. The cofactor is K(+).

It localises to the cytoplasm. It catalyses the reaction (R)-pantothenate + ATP = (R)-4'-phosphopantothenate + ADP + H(+). Its pathway is cofactor biosynthesis; coenzyme A biosynthesis; CoA from (R)-pantothenate: step 1/5. Its function is as follows. Catalyzes the phosphorylation of pantothenate (Pan), the first step in CoA biosynthesis. In Roseiflexus castenholzii (strain DSM 13941 / HLO8), this protein is Type III pantothenate kinase.